Here is a 374-residue protein sequence, read N- to C-terminus: Alcohol dehydrogenase class-3 (374 aa).

Position 2 is an N-acetylalanine (alanine 2). Cysteine 45, histidine 67, cysteine 97, cysteine 100, cysteine 103, cysteine 111, and cysteine 174 together coordinate Zn(2+). An N6-succinyllysine modification is found at lysine 233. Phosphoserine is present on serine 247. Position 315 is an N6-succinyllysine (lysine 315). A Phosphoserine modification is found at serine 324.

This sequence belongs to the zinc-containing alcohol dehydrogenase family. Class-III subfamily. Homodimer. Zn(2+) is required as a cofactor.

It is found in the cytoplasm. The enzyme catalyses a primary alcohol + NAD(+) = an aldehyde + NADH + H(+). The catalysed reaction is a secondary alcohol + NAD(+) = a ketone + NADH + H(+). It carries out the reaction S-(hydroxymethyl)glutathione + NADP(+) = S-formylglutathione + NADPH + H(+). It catalyses the reaction S-(hydroxymethyl)glutathione + NAD(+) = S-formylglutathione + NADH + H(+). The enzyme catalyses 20-oxo-(5Z,8Z,11Z,14Z)-eicosatetraenoate + NAD(+) + H2O = (5Z,8Z,11Z,14Z)-eicosatetraenedioate + NADH + 2 H(+). The catalysed reaction is 20-hydroxy-(5Z,8Z,11Z,14Z)-eicosatetraenoate + NAD(+) = 20-oxo-(5Z,8Z,11Z,14Z)-eicosatetraenoate + NADH + H(+). It carries out the reaction S-nitrosoglutathione + NADH + H(+) = S-(hydroxysulfenamide)glutathione + NAD(+). Functionally, catalyzes the oxidation of long-chain primary alcohols and the oxidation of S-(hydroxymethyl) glutathione. Also oxidizes long chain omega-hydroxy fatty acids, such as 20-HETE, producing both the intermediate aldehyde, 20-oxoarachidonate and the end product, a dicarboxylic acid, (5Z,8Z,11Z,14Z)-eicosatetraenedioate. Class-III ADH is remarkably ineffective in oxidizing ethanol. Required for clearance of cellular formaldehyde, a cytotoxic and carcinogenic metabolite that induces DNA damage. Also acts as a S-nitroso-glutathione reductase by catalyzing the NADH-dependent reduction of S-nitrosoglutathione, thereby regulating protein S-nitrosylation. This Bos taurus (Bovine) protein is Alcohol dehydrogenase class-3.